The sequence spans 187 residues: Oleosin Zm-II (187 aa).

At Ala2 the chain carries N-acetylalanine. Residues 2 to 51 (ADRDRSGIYGGAHATYGQQQQQGGGGRPMGEQVKKGMLHDKGPTASQALT) form a polar region. Residues 17–42 (YGQQQQQGGGGRPMGEQVKKGMLHDK) are disordered. The span at 33–42 (QVKKGMLHDK) shows a compositional bias: basic and acidic residues. The next 3 helical transmembrane spans lie at 50–70 (LTVA…GLAL), 83–103 (VFLI…TAVM), and 104–124 (GFLT…CLAN). Residues 52-123 (VATLFPLGGL…GGLSSLTCLA (72 aa)) are hydrophobic. Over residues 155–169 (TAQAGQAIQGRAQEA) the composition is skewed to low complexity. A disordered region spans residues 155-187 (TAQAGQAIQGRAQEAGTGGGAGAGAGGGGRASS). Residues 170 to 187 (GTGGGAGAGAGGGGRASS) show a composition bias toward gly residues.

It belongs to the oleosin family. Post-translationally, the N-terminus is blocked. Found in embryonic axis, scutellum, and aleurone layer.

It localises to the lipid droplet. The protein localises to the membrane. May have a structural role to stabilize the lipid body during desiccation of the seed by preventing coalescence of the oil. Probably interacts with both lipid and phospholipid moieties of lipid bodies. May also provide recognition signals for specific lipase anchorage in lipolysis during seedling growth. This Zea mays (Maize) protein is Oleosin Zm-II (OLE18).